The following is a 181-amino-acid chain: uncharacterized protein (181 aa).

To M.pneumoniae MPN_635 C-terminal region.

This is an uncharacterized protein from Mycoplasma pneumoniae (strain ATCC 29342 / M129 / Subtype 1) (Mycoplasmoides pneumoniae).